The primary structure comprises 336 residues: NEDD4 family-interacting protein 2 (336 aa).

Disordered stretches follow at residues 1–24 and 37–156; these read MARRRSQRVCASGPSMLNSARGAP and SAAA…SITV. Over 1-231 the chain is Cytoplasmic; the sequence is MARRRSQRVC…ADQLRVGNDG (231 aa). Residues 37-48 are compositionally biased toward low complexity; sequence SAAAAGATGSEE. A compositionally biased stretch (basic and acidic residues) spans 78 to 99; it reads EHGEDSLSRKPDPEPGRMDHHQ. The tract at residues 148-151 is interaction with NEDD4; the sequence is PPPY. The PPxY motif 1 motif lies at 148–151; sequence PPPY. Tyrosine 151, tyrosine 167, tyrosine 171, and tyrosine 177 each carry phosphotyrosine; by SRC. 2 consecutive short sequence motifs (PPxY motif) follow at residues 174-177 and 184-186; these read PPPY and PTY. The helical transmembrane segment at 232–252 threads the bilayer; sequence IFMLAFFMAFIFNWLGFCLSF. The Extracellular portion of the chain corresponds to 253-257; that stretch reads CITNT. A helical membrane pass occupies residues 258–278; sequence IAGRYGAICGFGLSLIKWILI. Over 279-287 the chain is Cytoplasmic; that stretch reads VRFSDYFTG. Residues 288 to 308 traverse the membrane as a helical segment; it reads YFNGQYWLWWIFLVLGLLLFF. At 309 to 336 the chain is on the extracellular side; that stretch reads RGFVNYLKVRNMSESMAAAHRTRYFFLL.

Forms heterodimers with NDFIP1. Interacts with HECT domain-containing E3 ubiquitin-protein ligases, including NEDD4. Interacts with NEDD4L. Interacts with PTEN. When phosphorylated at Tyr-167, interacts with SRC and LYN SH2 domain. May thus act as a scaffold that recruits SRC to NDFIP1, enhancing NDFIP1 phosphorylation. Interacts with SLC11A2/DMT1. May interact with phosphorylated EGFR. Interacts with KCNH2. Post-translationally, ubiquitinated by NEDD4 and ITCH. Also ubiquitinated by NEDD4L. Ubiquitination by NEDD4 or NEDD4L does not affect turnover. Undergoes transient tyrosine-phosphorylation following EGF stimulation, most probably catalyzed by SRC. Phosphorylation on Tyr-151, Tyr-171 and Tyr-177 are dependent on the phosphorylation on Tyr-167. Also phosphorylated by LYN and FYN. In terms of tissue distribution, expressed in brain, lung, heart, skeletal muscle, kidney, liver and placenta.

The protein localises to the endosome membrane. It localises to the golgi apparatus membrane. It is found in the endosome. The protein resides in the multivesicular body membrane. Activates HECT domain-containing E3 ubiquitin-protein ligases, including ITCH, NEDD4, NEDD4L, SMURF2, WWP1 and WWP2, and consequently modulates the stability of their targets. As a result, may control many cellular processes. Recruits ITCH, NEDD4 and SMURF2 to endosomal membranes. Negatively regulates KCNH2 potassium channel activity by decreasing its cell-surface expression and interfering with channel maturation through recruitment of NEDD4L to the Golgi apparatus and multivesicular body where it mediates KCNH2 degradation. May modulate EGFR signaling. Together with NDFIP1, limits the cytokine signaling and expansion of effector Th2 T-cells by promoting degradation of JAK1, probably by ITCH- and NEDD4L-mediated ubiquitination. This is NEDD4 family-interacting protein 2 (NDFIP2) from Homo sapiens (Human).